We begin with the raw amino-acid sequence, 165 residues long: Shikimate kinase (165 aa).

Position 11 to 16 (11 to 16 (GAGKTT)) interacts with ATP. Thr15 is a binding site for Mg(2+). Residues Asp33, Arg57, and Gly78 each coordinate substrate. Arg116 contacts ATP. Position 134 (Arg134) interacts with substrate.

The protein belongs to the shikimate kinase family. In terms of assembly, monomer. Mg(2+) is required as a cofactor.

The protein localises to the cytoplasm. The enzyme catalyses shikimate + ATP = 3-phosphoshikimate + ADP + H(+). It participates in metabolic intermediate biosynthesis; chorismate biosynthesis; chorismate from D-erythrose 4-phosphate and phosphoenolpyruvate: step 5/7. In terms of biological role, catalyzes the specific phosphorylation of the 3-hydroxyl group of shikimic acid using ATP as a cosubstrate. In Bacillus anthracis (strain A0248), this protein is Shikimate kinase.